The primary structure comprises 501 residues: Aldehyde dehydrogenase 1A1 (501 aa).

Ser2 carries the post-translational modification N-acetylserine. N6-acetyllysine occurs at positions 91 and 128. NAD(+) is bound by residues 167–170 (LPWN), 193–196 (KPAE), 226–227 (GP), and 246–247 (GS). At Lys252 the chain carries N6-acetyllysine. Glu269 (proton acceptor) is an active-site residue. 269 to 271 (ELG) provides a ligand contact to NAD(+). Catalysis depends on Cys303, which acts as the Nucleophile. The mediates interaction with PRMT3 stretch occupies residues 336 to 501 (LTPGVSQGPQ…VTVKISQKNS (166 aa)). Thr337 carries the post-translational modification Phosphothreonine. 349 to 353 (EQYDK) is a binding site for NAD(+). 2 positions are modified to N6-acetyllysine: Lys353 and Lys367. An NAD(+)-binding site is contributed by 400-402 (EIF). The residue at position 410 (Lys410) is an N6-acetyllysine. Ser413 carries the phosphoserine modification. 3 positions are modified to N6-acetyllysine: Lys419, Lys435, and Lys495.

Belongs to the aldehyde dehydrogenase family. Homotetramer. Interacts with PRMT3; the interaction is direct, inhibits ALDH1A1 aldehyde dehydrogenase activity and is independent of the methyltransferase activity of PRMT3. In terms of processing, the N-terminus is blocked most probably by acetylation.

It localises to the cytoplasm. Its subcellular location is the cytosol. The protein resides in the cell projection. The protein localises to the axon. It carries out the reaction an aldehyde + NAD(+) + H2O = a carboxylate + NADH + 2 H(+). The enzyme catalyses all-trans-retinal + NAD(+) + H2O = all-trans-retinoate + NADH + 2 H(+). The catalysed reaction is 9-cis-retinal + NAD(+) + H2O = 9-cis-retinoate + NADH + 2 H(+). It catalyses the reaction 11-cis-retinal + NAD(+) + H2O = 11-cis-retinoate + NADH + 2 H(+). It carries out the reaction 13-cis-retinal + NAD(+) + H2O = 13-cis-retinoate + NADH + 2 H(+). The enzyme catalyses 3-deoxyglucosone + NAD(+) + H2O = 2-dehydro-3-deoxy-D-gluconate + NADH + 2 H(+). The catalysed reaction is (E)-4-hydroxynon-2-enal + NAD(+) + H2O = (E)-4-hydroxynon-2-enoate + NADH + 2 H(+). It catalyses the reaction malonaldehyde + NAD(+) + H2O = 3-oxopropanoate + NADH + 2 H(+). It carries out the reaction hexanal + NAD(+) + H2O = hexanoate + NADH + 2 H(+). The enzyme catalyses propanal + NAD(+) + H2O = propanoate + NADH + 2 H(+). The catalysed reaction is acetaldehyde + NAD(+) + H2O = acetate + NADH + 2 H(+). It catalyses the reaction benzaldehyde + NAD(+) + H2O = benzoate + NADH + 2 H(+). It carries out the reaction 4-aminobutanal + NAD(+) + H2O = 4-aminobutanoate + NADH + 2 H(+). Its pathway is cofactor metabolism; retinol metabolism. Cytosolic dehydrogenase that catalyzes the irreversible oxidation of a wide range of aldehydes to their corresponding carboxylic acid. Functions downstream of retinol dehydrogenases and catalyzes the oxidation of retinaldehyde into retinoic acid, the second step in the oxidation of retinol/vitamin A into retinoic acid. This pathway is crucial to control the levels of retinol and retinoic acid, two important molecules which excess can be teratogenic and cytotoxic. Also oxidizes aldehydes resulting from lipid peroxidation like (E)-4-hydroxynon-2-enal/HNE, malonaldehyde and hexanal that form protein adducts and are highly cytotoxic. By participating for instance to the clearance of (E)-4-hydroxynon-2-enal/HNE in the lens epithelium prevents the formation of HNE-protein adducts and lens opacification. Also functions downstream of fructosamine-3-kinase in the fructosamine degradation pathway by catalyzing the oxidation of 3-deoxyglucosone, the carbohydrate product of fructosamine 3-phosphate decomposition, which is itself a potent glycating agent that may react with lysine and arginine side-chains of proteins. Also has an aminobutyraldehyde dehydrogenase activity and is probably part of an alternative pathway for the biosynthesis of GABA/4-aminobutanoate in midbrain, thereby playing a role in GABAergic synaptic transmission. The chain is Aldehyde dehydrogenase 1A1 from Equus caballus (Horse).